Here is a 314-residue protein sequence, read N- to C-terminus: Elongation factor Ts (314 aa).

An involved in Mg(2+) ion dislocation from EF-Tu region spans residues 82-85 (TDFV).

The protein belongs to the EF-Ts family.

The protein resides in the cytoplasm. Functionally, associates with the EF-Tu.GDP complex and induces the exchange of GDP to GTP. It remains bound to the aminoacyl-tRNA.EF-Tu.GTP complex up to the GTP hydrolysis stage on the ribosome. The sequence is that of Elongation factor Ts from Nostoc punctiforme (strain ATCC 29133 / PCC 73102).